A 551-amino-acid chain; its full sequence is Hydroxymethylpyrimidine/phosphomethylpyrimidine kinase THI21 (551 aa).

Glutamine 64 is a binding site for 4-amino-5-hydroxymethyl-2-methylpyrimidine.

This sequence in the N-terminal section; belongs to the ThiD family. In the C-terminal section; belongs to the thiaminase-2 family.

The catalysed reaction is 4-amino-5-hydroxymethyl-2-methylpyrimidine + ATP = 4-amino-2-methyl-5-(phosphooxymethyl)pyrimidine + ADP + H(+). The enzyme catalyses 4-amino-2-methyl-5-(phosphooxymethyl)pyrimidine + ATP = 4-amino-2-methyl-5-(diphosphooxymethyl)pyrimidine + ADP. It participates in cofactor biosynthesis; thiamine diphosphate biosynthesis; 4-amino-2-methyl-5-diphosphomethylpyrimidine from 5-amino-1-(5-phospho-D-ribosyl)imidazole: step 2/3. It functions in the pathway cofactor biosynthesis; thiamine diphosphate biosynthesis; 4-amino-2-methyl-5-diphosphomethylpyrimidine from 5-amino-1-(5-phospho-D-ribosyl)imidazole: step 3/3. In terms of biological role, catalyzes the phosphorylation of hydroxymethylpyrimidine phosphate (HMP-P) to HMP-PP, and also probably that of HMP to HMP-P. The polypeptide is Hydroxymethylpyrimidine/phosphomethylpyrimidine kinase THI21 (THI21) (Saccharomyces cerevisiae (strain ATCC 204508 / S288c) (Baker's yeast)).